Consider the following 139-residue polypeptide: Large ribosomal subunit protein uL14 (139 aa).

It belongs to the universal ribosomal protein uL14 family.

This is Large ribosomal subunit protein uL14 (RPL23) from Syntrichia ruralis (Great hairy screw-moss).